The sequence spans 459 residues: Bifunctional protein GlmU (459 aa).

Positions 1 to 230 are pyrophosphorylase; sequence MVKRYAVILA…FDETIGINDR (230 aa). Residues 9-12, Lys23, Gln73, and 78-79 contribute to the UDP-N-acetyl-alpha-D-glucosamine site; these read LAAG and GT. Asp103 contributes to the Mg(2+) binding site. 4 residues coordinate UDP-N-acetyl-alpha-D-glucosamine: Gly140, Glu155, Asn170, and Asn228. Asn228 serves as a coordination point for Mg(2+). The interval 231 to 251 is linker; it reads IALAEAERIMRDRICRQHMKN. Positions 252–459 are N-acetyltransferase; the sequence is GVTIIDPACT…VDRLRGKKKS (208 aa). The UDP-N-acetyl-alpha-D-glucosamine site is built by Arg333 and Lys351. His363 serves as the catalytic Proton acceptor. The UDP-N-acetyl-alpha-D-glucosamine site is built by Tyr366 and Asn377. Acetyl-CoA-binding positions include 386–387, Ala423, and Arg440; that span reads NY.

It in the N-terminal section; belongs to the N-acetylglucosamine-1-phosphate uridyltransferase family. This sequence in the C-terminal section; belongs to the transferase hexapeptide repeat family. In terms of assembly, homotrimer. The cofactor is Mg(2+).

The protein resides in the cytoplasm. The enzyme catalyses alpha-D-glucosamine 1-phosphate + acetyl-CoA = N-acetyl-alpha-D-glucosamine 1-phosphate + CoA + H(+). It catalyses the reaction N-acetyl-alpha-D-glucosamine 1-phosphate + UTP + H(+) = UDP-N-acetyl-alpha-D-glucosamine + diphosphate. The protein operates within nucleotide-sugar biosynthesis; UDP-N-acetyl-alpha-D-glucosamine biosynthesis; N-acetyl-alpha-D-glucosamine 1-phosphate from alpha-D-glucosamine 6-phosphate (route II): step 2/2. It functions in the pathway nucleotide-sugar biosynthesis; UDP-N-acetyl-alpha-D-glucosamine biosynthesis; UDP-N-acetyl-alpha-D-glucosamine from N-acetyl-alpha-D-glucosamine 1-phosphate: step 1/1. It participates in bacterial outer membrane biogenesis; LPS lipid A biosynthesis. Catalyzes the last two sequential reactions in the de novo biosynthetic pathway for UDP-N-acetylglucosamine (UDP-GlcNAc). The C-terminal domain catalyzes the transfer of acetyl group from acetyl coenzyme A to glucosamine-1-phosphate (GlcN-1-P) to produce N-acetylglucosamine-1-phosphate (GlcNAc-1-P), which is converted into UDP-GlcNAc by the transfer of uridine 5-monophosphate (from uridine 5-triphosphate), a reaction catalyzed by the N-terminal domain. This Geobacillus thermodenitrificans (strain NG80-2) protein is Bifunctional protein GlmU.